Here is a 572-residue protein sequence, read N- to C-terminus: Transmembrane glycoprotein NMB (572 aa).

The first 22 residues, 1–22 (MESLCGVLVFLLLAAGLPLQAA), serve as a signal peptide directing secretion. The Extracellular segment spans residues 23–500 (KRFRDVLGHE…DLGSPLRTVN (478 aa)). Residues N93, N134, N200, N249, N275, N296, N300, N306, and N312 are each glycosylated (N-linked (GlcNAc...) asparagine). The PKD domain maps to 251-338 (SDETFLRDLP…SPSSSTSPSP (88 aa)). Residues 321-359 (GPCPSPTPSPSSSTSPSPASSPSPTLSTPSPSLMPTGHK) form a disordered region. Over residues 330–356 (PSSSTSPSPASSPSPTLSTPSPSLMPT) the composition is skewed to low complexity. N-linked (GlcNAc...) asparagine glycosylation is found at N461 and N469. A helical membrane pass occupies residues 501–521 (GVLISIGCLAMFVTMVTILLY). Over 522-572 (KKHKTYKPIGNCTRNVVKGKGLSVFLSHAKAPFSRGDREKDPLLQDKPWML) the chain is Cytoplasmic. Position 544 is a phosphoserine (S544). A Cell attachment site motif is present at residues 556-558 (RGD).

The protein belongs to the PMEL/NMB family.

The protein resides in the cell membrane. It localises to the melanosome membrane. Its subcellular location is the early endosome membrane. Could be a melanogenic enzyme. The chain is Transmembrane glycoprotein NMB (Gpnmb) from Rattus norvegicus (Rat).